Consider the following 851-residue polypeptide: Protein FAM13B (851 aa).

Residues 23–212 (IPLDELQQGG…GLLENYYEFF (190 aa)) form the Rho-GAP domain. A compositionally biased stretch (basic and acidic residues) spans 556–565 (IKDAKHKNSD). The tract at residues 556–611 (IKDAKHKNSDGEFAPQTRPRSNTLPKSFGSSLDHEDGESEGEPRVIQKEKTPSKEA) is disordered. Positions 573-585 (RPRSNTLPKSFGS) are enriched in polar residues. A compositionally biased stretch (basic and acidic residues) spans 596-611 (GEPRVIQKEKTPSKEA).

Belongs to the FAM13 family.

The chain is Protein FAM13B (Fam13b) from Mus musculus (Mouse).